The sequence spans 94 residues: Pyrimidine/purine nucleoside phosphorylase (94 aa).

It belongs to the nucleoside phosphorylase PpnP family.

It carries out the reaction a purine D-ribonucleoside + phosphate = a purine nucleobase + alpha-D-ribose 1-phosphate. The catalysed reaction is adenosine + phosphate = alpha-D-ribose 1-phosphate + adenine. The enzyme catalyses cytidine + phosphate = cytosine + alpha-D-ribose 1-phosphate. It catalyses the reaction guanosine + phosphate = alpha-D-ribose 1-phosphate + guanine. It carries out the reaction inosine + phosphate = alpha-D-ribose 1-phosphate + hypoxanthine. The catalysed reaction is thymidine + phosphate = 2-deoxy-alpha-D-ribose 1-phosphate + thymine. The enzyme catalyses uridine + phosphate = alpha-D-ribose 1-phosphate + uracil. It catalyses the reaction xanthosine + phosphate = alpha-D-ribose 1-phosphate + xanthine. Catalyzes the phosphorolysis of diverse nucleosides, yielding D-ribose 1-phosphate and the respective free bases. Can use uridine, adenosine, guanosine, cytidine, thymidine, inosine and xanthosine as substrates. Also catalyzes the reverse reactions. In Salmonella typhimurium (strain LT2 / SGSC1412 / ATCC 700720), this protein is Pyrimidine/purine nucleoside phosphorylase.